The following is a 360-amino-acid chain: Mannose-1-phosphate guanylyltransferase catalytic subunit beta (360 aa).

Positions 2–222 (KALILVGGYG…QGFWMDIGQP (221 aa)) are substrate-binding domain. Aspartate 110 is a GDP-alpha-D-mannose binding site. Aspartate 110 contacts Mg(2+). The active site involves lysine 162. Aspartate 218 serves as a coordination point for GDP-alpha-D-mannose. Aspartate 218 provides a ligand contact to Mg(2+). The hexapeptide repeat domain stretch occupies residues 245–360 (CSGPGIVGNV…ESVPEPRIIM (116 aa)).

The protein belongs to the transferase hexapeptide repeat family. In terms of assembly, component of the GMPPA-GMPPB mannose-1-phosphate guanylyltransferase complex composed of 4 GMPPA subunits and 8 GMPPB subunits; the complex is organized into three layers, a central layer made up of 2 GMPPA dimers sandwiched between two layers each made up of 2 GMPPB dimers. GMPPB catalytic activity is reduced when part of the complex and binding of GDP-alpha-D-Mannose by GMPPA induces allosteric feedback inhibition of GMPPB. Mg(2+) serves as cofactor. Ubiquitously expressed, including in brain and skeletal muscle. As to expression, weakly expressed with highest expression in skeletal muscle, brain and gonads.

It localises to the cytoplasm. It catalyses the reaction alpha-D-mannose 1-phosphate + GTP + H(+) = GDP-alpha-D-mannose + diphosphate. It functions in the pathway nucleotide-sugar biosynthesis; GDP-alpha-D-mannose biosynthesis; GDP-alpha-D-mannose from alpha-D-mannose 1-phosphate (GTP route): step 1/1. Enzyme activity is reduced by incorporation into the GMPPA-GMPPB mannose-1-phosphate guanylyltransferase complex. Allosterically inhibited, when part of the GMPPA-GMPPB complex, by GDP-alpha-D-mannose binding to GMPPA. Catalytic subunit of the GMPPA-GMPPB mannose-1-phosphate guanylyltransferase complex. Catalyzes the formation of GDP-mannose, an essential precursor of glycan moieties of glycoproteins and glycolipids. Can catalyze the reverse reaction in vitro. Together with GMPPA regulates GDP-alpha-D-mannose levels. This Homo sapiens (Human) protein is Mannose-1-phosphate guanylyltransferase catalytic subunit beta.